Reading from the N-terminus, the 727-residue chain is NADH-ubiquinone oxidoreductase 75 kDa subunit, mitochondrial (727 aa).

The N-terminal 23 residues, 1–23 (MLRIPVRKALVGLSKSPKGCVRT), are a transit peptide targeting the mitochondrion. A 2Fe-2S ferredoxin-type domain is found at 30–108 (NLIEVFVDGQ…GWNILTNSEK (79 aa)). Cys-64, Cys-75, and Cys-78 together coordinate [2Fe-2S] cluster. Residue Lys-84 is modified to N6-acetyllysine. A [2Fe-2S] cluster-binding site is contributed by Cys-92. The 40-residue stretch at 108-147 (KSKKAREGVMEFLLANHPLDCPICDQGGECDLQDQSMMFG) folds into the 4Fe-4S His(Cys)3-ligated-type domain. [4Fe-4S] cluster is bound by residues His-124, Cys-128, Cys-131, Cys-137, Cys-176, Cys-179, Cys-182, and Cys-226. The 4Fe-4S Mo/W bis-MGD-type domain occupies 245–301 (TRKTESIDVMDAVGSNIVVSTRTGEVMRILPRMHEDINEEWISDKTRFAYDGLKRQR). An N6-acetyllysine mark is found at Lys-467, Lys-499, and Lys-709.

It belongs to the complex I 75 kDa subunit family. In terms of assembly, core subunit of respiratory chain NADH dehydrogenase (Complex I) which is composed of 45 different subunits. This is the largest subunit of complex I and it is a component of the iron-sulfur (IP) fragment of the enzyme. Complex I associates with ubiquinol-cytochrome reductase complex (Complex III) to form supercomplexes. Interacts with MDM2 and AKAP1. [2Fe-2S] cluster serves as cofactor. [4Fe-4S] cluster is required as a cofactor.

It localises to the mitochondrion inner membrane. The enzyme catalyses a ubiquinone + NADH + 5 H(+)(in) = a ubiquinol + NAD(+) + 4 H(+)(out). Its function is as follows. Core subunit of the mitochondrial membrane respiratory chain NADH dehydrogenase (Complex I) which catalyzes electron transfer from NADH through the respiratory chain, using ubiquinone as an electron acceptor. Essential for catalysing the entry and efficient transfer of electrons within complex I. Plays a key role in the assembly and stability of complex I and participates in the association of complex I with ubiquinol-cytochrome reductase complex (Complex III) to form supercomplexes. This Macaca fascicularis (Crab-eating macaque) protein is NADH-ubiquinone oxidoreductase 75 kDa subunit, mitochondrial (NDUFS1).